Consider the following 250-residue polypeptide: Ribosomal RNA small subunit methyltransferase J (250 aa).

Residues 96-97 (RD) and D168 each bind S-adenosyl-L-methionine.

Belongs to the methyltransferase superfamily. RsmJ family.

The protein resides in the cytoplasm. The enzyme catalyses guanosine(1516) in 16S rRNA + S-adenosyl-L-methionine = N(2)-methylguanosine(1516) in 16S rRNA + S-adenosyl-L-homocysteine + H(+). Specifically methylates the guanosine in position 1516 of 16S rRNA. This chain is Ribosomal RNA small subunit methyltransferase J, found in Neisseria meningitidis serogroup C / serotype 2a (strain ATCC 700532 / DSM 15464 / FAM18).